The sequence spans 83 residues: uncharacterized protein (83 aa).

The interval 40-65 is disordered; that stretch reads RMQAGASPDEDNDVNGETSFSRSFGG. Residues 54–65 are compositionally biased toward polar residues; that stretch reads NGETSFSRSFGG.

This is an uncharacterized protein from Dictyostelium discoideum (Social amoeba).